A 389-amino-acid chain; its full sequence is 2-deoxystreptamine N-acetyl-D-glucosaminyltransferase (389 aa).

It belongs to the glycosyltransferase group 1 family.

The catalysed reaction is 2-deoxystreptamine + UDP-N-acetyl-alpha-D-glucosamine = 2'-N-acetylparomamine + UDP + H(+). Its pathway is antibiotic biosynthesis; butirosin biosynthesis. In terms of biological role, glycosyltransferase involved in the biosynthesis of butirosin by mediating conversion of 2-deoxystreptamine (2-DOS) to 2'-N-acetylparomamine using UDP-alpha-D-glucosamine as sugar donor. The sequence is that of 2-deoxystreptamine N-acetyl-D-glucosaminyltransferase (btrM) from Niallia circulans (Bacillus circulans).